A 138-amino-acid polypeptide reads, in one-letter code: MRTLWIMAVLQVGVEGHLMQFETLIMKVAGRSGVWYYGSYGCFCGAGGQGRPQDASDRCCFVHDCCYGKVNGCDPKKDFYTYSEENGAIVCGGDDPCKKEICECDKDAAICFRDNKDTYDNKYWFFPAKNCQEESEPC.

The signal sequence occupies residues 1-16 (MRTLWIMAVLQVGVEG). 7 disulfide bridges follow: cysteine 42/cysteine 131, cysteine 44/cysteine 60, cysteine 59/cysteine 111, cysteine 65/cysteine 138, cysteine 66/cysteine 104, cysteine 73/cysteine 97, and cysteine 91/cysteine 102. Ca(2+)-binding residues include phenylalanine 43, glycine 45, and glycine 47. Histidine 63 is a catalytic residue. Aspartate 64 lines the Ca(2+) pocket. Aspartate 105 is an active-site residue.

Ca(2+) is required as a cofactor. As to expression, expressed by the venom gland.

It localises to the secreted. It carries out the reaction a 1,2-diacyl-sn-glycero-3-phosphocholine + H2O = a 1-acyl-sn-glycero-3-phosphocholine + a fatty acid + H(+). Its function is as follows. Snake venom phospholipase A2 (PLA2) that shows a moderate inhibition of ADP-induced human platelet aggregation when tested on platelet rich plasma. Exhibits high hydrolytic activities and prefers the anionic micelles (dPPC with deoxycholate) to the zwitterionic micelles (dPPC with Triton X-100). PLA2 catalyzes the calcium-dependent hydrolysis of the 2-acyl groups in 3-sn-phosphoglycerides. This is Acidic phospholipase A2 Ts-A1 from Trimeresurus stejnegeri (Chinese green tree viper).